Consider the following 75-residue polypeptide: DNA-directed RNA polymerase subunit omega (75 aa).

This sequence belongs to the RNA polymerase subunit omega family. In cyanobacteria the RNAP catalytic core is composed of 2 alpha, 1 beta, 1 beta', 1 gamma and 1 omega subunit. When a sigma factor is associated with the core the holoenzyme is formed, which can initiate transcription.

The enzyme catalyses RNA(n) + a ribonucleoside 5'-triphosphate = RNA(n+1) + diphosphate. Functionally, promotes RNA polymerase assembly. Latches the N- and C-terminal regions of the beta' subunit thereby facilitating its interaction with the beta and alpha subunits. The protein is DNA-directed RNA polymerase subunit omega of Microcystis aeruginosa (strain NIES-843 / IAM M-2473).